The chain runs to 431 residues: 5-methylthioadenosine/S-adenosylhomocysteine deaminase (431 aa).

Zn(2+) contacts are provided by H66 and H68. The substrate site is built by E95, R147, and H185. H212 lines the Zn(2+) pocket. Positions 215 and 300 each coordinate substrate. D300 serves as a coordination point for Zn(2+).

The protein belongs to the metallo-dependent hydrolases superfamily. MTA/SAH deaminase family. Zn(2+) serves as cofactor.

The enzyme catalyses S-adenosyl-L-homocysteine + H2O + H(+) = S-inosyl-L-homocysteine + NH4(+). It catalyses the reaction S-methyl-5'-thioadenosine + H2O + H(+) = S-methyl-5'-thioinosine + NH4(+). Catalyzes the deamination of 5-methylthioadenosine and S-adenosyl-L-homocysteine into 5-methylthioinosine and S-inosyl-L-homocysteine, respectively. Is also able to deaminate adenosine. The sequence is that of 5-methylthioadenosine/S-adenosylhomocysteine deaminase from Desulfitobacterium hafniense (strain DSM 10664 / DCB-2).